Here is a 653-residue protein sequence, read N- to C-terminus: Exocyst complex component 7 (653 aa).

The tract at residues 1 to 384 (MIPPQEASAR…TKNKLPGLIT (384 aa)) is SEC8 and ARHQ binding. 2 coiled-coil regions span residues 5–42 (QEAS…TKNM) and 63–85 (VHKQ…SCLD). Serine 133 carries the post-translational modification Phosphoserine. A disordered region spans residues 238 to 272 (FRKSSSSSGVPYSPAIPNKRKDTPTKKPIKRPGRD).

The protein belongs to the EXO70 family. In terms of assembly, the exocyst complex is composed of EXOC1, EXOC2, EXOC3, EXOC4, EXOC5, EXOC6, EXOC7 and EXOC8. Interacts with ARHQ in a GTP-dependent manner. Interacts with RAB11FIP3.

It localises to the cytoplasm. It is found in the cytosol. Its subcellular location is the cell membrane. The protein localises to the midbody. The protein resides in the midbody ring. In terms of biological role, component of the exocyst complex involved in the docking of exocytic vesicles with fusion sites on the plasma membrane. In adipocytes, plays a crucial role in targeting SLC2A4 vesicle to the plasma membrane in response to insulin, perhaps directing the vesicle to the precise site of fusion. It is required for neuron survival and plays an essential role in cortical development. The protein is Exocyst complex component 7 (Exoc7) of Rattus norvegicus (Rat).